Here is a 173-residue protein sequence, read N- to C-terminus: 16S rRNA aminocarboxypropyltransferase (173 aa).

Positions 25, 72, 96, and 115 each coordinate S-adenosyl-L-methionine.

The protein belongs to the TDD superfamily. TSR3 family.

The protein localises to the cytoplasm. It catalyses the reaction an N(1)-methylpseudouridine in rRNA + S-adenosyl-L-methionine = N(1)-methyl-N(3)-[(3S)-3-amino-3-carboxypropyl]pseudouridine in rRNA + S-methyl-5'-thioadenosine + H(+). In terms of biological role, aminocarboxypropyltransferase that catalyzes the aminocarboxypropyl transfer on pseudouridine corresponding to position 914 in M.jannaschii 16S rRNA. It constitutes the last step in biosynthesis of the hypermodified N1-methyl-N3-(3-amino-3-carboxypropyl) pseudouridine (m1acp3-Psi). In Methanococcoides burtonii (strain DSM 6242 / NBRC 107633 / OCM 468 / ACE-M), this protein is 16S rRNA aminocarboxypropyltransferase.